A 735-amino-acid polypeptide reads, in one-letter code: Urea active transporter (735 aa).

Residues 1 to 14 (MGEFKPPLPQGAGY) lie on the Cytoplasmic side of the membrane. Residues 15–35 (AIVLGLGAVFAGMMVLTTYLL) traverse the membrane as a helical segment. Residues 36 to 85 (KRYQKEIITAEEFTTAGRSVKTGLVAAAVVSSWIWCSTLLTSSTKEYADG) are Extracellular-facing. Residues 86–106 (IFGGYAYAAGACFQIIAFAIL) form a helical membrane-spanning segment. Over 107–130 (AIKTKQMAPNAHTYLELVRTRYGK) the chain is Cytoplasmic. Residues 131–151 (IGHGCYLFYAIATNILVTSML) traverse the membrane as a helical segment. Topologically, residues 152 to 166 (LTSGSAVFSDLTGMN) are extracellular. The helical transmembrane segment at 167–187 (TIASCFLLPVGVVVYTLFGGI) threads the bilayer. The Cytoplasmic portion of the chain corresponds to 188-189 (KA). The chain crosses the membrane as a helical span at residues 190–210 (TFLTDYMHTCVIIIIVLVFAF). Over 211-253 (KVYATSDVLGSPGKVYDLVREAAKRHPVDGNYQGEYMTMTSKS) the chain is Extracellular. Residues 254–274 (AGILLIINLIGNFGTVFLDNG) traverse the membrane as a helical segment. The Cytoplasmic segment spans residues 275 to 295 (YWNKAISASPAASLKAYAIGG). The chain crosses the membrane as a helical span at residues 296-316 (LAWFAVPSLISLTMGLACLAV). The Extracellular segment spans residues 317–343 (ETSPNFPTYPDPLTSFQANSGLVLPAA). The helical transmembrane segment at 344–364 (AIAIMGKGGAVASLLMIFMAV) threads the bilayer. Topologically, residues 365–403 (TSAMSAELIAVSSVFTYDIYREYIDPRASGKKLIYTSHV) are cytoplasmic. The chain crosses the membrane as a helical span at residues 404–424 (ACIFFGLAMSGFSVGLYYGGI). Position 425 (S425) is a topological domain, extracellular. The chain crosses the membrane as a helical span at residues 426-446 (MGYIYEMMGIIISSAVLPVVL). Over 447 to 454 (TLCSKDMN) the chain is Cytoplasmic. Residues 455–475 (LVAAVVSPILGTGLAIMSWLV) traverse the membrane as a helical segment. Over 476-496 (CTKSLYKELTVDTTFMDYPML) the chain is Extracellular. Residues 497-517 (TGNLVALLSPAIFIPILTYVF) traverse the membrane as a helical segment. At 518–618 (KPQNFDWEKM…EQRELARGLK (101 aa)) the chain is on the cytoplasmic side. The segment at 553-572 (ANDKEQEEETNSLVSDSEKN) is disordered. The chain crosses the membrane as a helical span at residues 619-639 (IAYFLCVFFALAFLVVWPMPM). At 640–650 (YGSKYIFSKKF) the chain is on the extracellular side. A helical transmembrane segment spans residues 651–671 (FTGWVVVMIIWLFFSAFAVCI). The Cytoplasmic segment spans residues 672–735 (YPLWEGRHGI…SHFGQVDEII (64 aa)).

Belongs to the sodium:solute symporter (SSF) (TC 2.A.21) family. In terms of assembly, may polymerize.

It is found in the membrane. Required for active transport of urea. The protein is Urea active transporter (DUR3) of Saccharomyces cerevisiae (strain ATCC 204508 / S288c) (Baker's yeast).